A 158-amino-acid chain; its full sequence is Ribonuclease H (158 aa).

The 142-residue stretch at 3–144 (GLKQLLIFTD…CDTLAREAAE (142 aa)) folds into the RNase H type-1 domain. Positions 12, 50, 72, and 136 each coordinate Mg(2+).

The protein belongs to the RNase H family. As to quaternary structure, monomer. Mg(2+) is required as a cofactor.

Its subcellular location is the cytoplasm. It carries out the reaction Endonucleolytic cleavage to 5'-phosphomonoester.. Endonuclease that specifically degrades the RNA of RNA-DNA hybrids. The sequence is that of Ribonuclease H from Shewanella loihica (strain ATCC BAA-1088 / PV-4).